The following is an 807-amino-acid chain: Enhancer of polycomb homolog 2 (807 aa).

Residues lysine 135, lysine 195, lysine 324, and lysine 362 each participate in a glycyl lysine isopeptide (Lys-Gly) (interchain with G-Cter in SUMO2) cross-link. Positions 376–396 are disordered; the sequence is DEFPQVLSPVSEPEEENDPDG. Serine 538 carries the post-translational modification Phosphoserine. A compositionally biased stretch (low complexity) spans 600–613; it reads QLQQKQQSQHSSQQ. Disordered stretches follow at residues 600–628 and 645–673; these read QLQQKQQSQHSSQQTHPKAQGSSTSDCMS and SAPVPSRSEVAKEQNTGHNNINGVVQPSG. Polar residues-rich tracts occupy residues 614–628 and 657–673; these read THPKAQGSSTSDCMS and EQNTGHNNINGVVQPSG. Phosphoserine is present on serine 754.

It belongs to the enhancer of polycomb family.

Its subcellular location is the nucleus. In terms of biological role, may play a role in transcription or DNA repair. The sequence is that of Enhancer of polycomb homolog 2 (EPC2) from Homo sapiens (Human).